We begin with the raw amino-acid sequence, 125 residues long: Large ribosomal subunit protein bL12 (125 aa).

Belongs to the bacterial ribosomal protein bL12 family. Homodimer. Part of the ribosomal stalk of the 50S ribosomal subunit. Forms a multimeric L10(L12)X complex, where L10 forms an elongated spine to which 2 to 4 L12 dimers bind in a sequential fashion. Binds GTP-bound translation factors.

Functionally, forms part of the ribosomal stalk which helps the ribosome interact with GTP-bound translation factors. Is thus essential for accurate translation. This Thermoanaerobacter pseudethanolicus (strain ATCC 33223 / 39E) (Clostridium thermohydrosulfuricum) protein is Large ribosomal subunit protein bL12.